Consider the following 597-residue polypeptide: MTPGRRSALLSRSVCGAIVLAVLVTVSGCASLPDSSTPQAIGTINRDSPGSSVAAPAPGREPDLLLRDFFKASTDPSNRHLAARQFLTPGVSGRWDDAASATIVDKVDVLPETRSADQATYTIRANKVGQLEPGGLYVAEEGSFETKISLELQGGEWRISELPAGVILDRAQFLNTYQRKSLYFLDPAGTTVVPDPRWVSGAQDQMASQLIGLLIDGPKAALAPAVRNELGDGVSVRGPITKADGRTAQVGVGLGGIRIDFAGVPPMDAQAKQLFAAQVIWTLANAEISGPYVLLADGEPFDERFPNGWTTADVASMNPFATSSATVGLHALREGSMVSVTETGVTPVPGYFGSARNMRSLALSQDGKLVAAVADTGRPAPEPASSLMVGAYEDGAASVLEGGAITRPTWAPDNSAIWAAVNGNTVIRVLREPGTGRTSVVNVDAGAVTALGATITELRLSRDGVRAALIVDGKVYLAIVTQMPGGEYALTNPRAVAIGLGSPALSLDWSTSDTIVVARAASDIPVVQVAVDGSRMDALPSRNLTAPVVAVDASTTTEFVADSRAVFQLNNNDPAGDRYWREVPGLTGVKAIPVLPG.

Positions 1–28 (MTPGRRSALLSRSVCGAIVLAVLVTVSG) are cleaved as a signal peptide. A lipid anchor (N-palmitoyl cysteine) is attached at Cys29. The S-diacylglycerol cysteine moiety is linked to residue Cys29. Residues 38–51 (PQAIGTINRDSPGS) are compositionally biased toward polar residues. The tract at residues 38–58 (PQAIGTINRDSPGSSVAAPAP) is disordered.

The protein belongs to the LpqB lipoprotein family.

Its subcellular location is the cell membrane. This is Lipoprotein LpqB from Rhodococcus jostii (strain RHA1).